The following is a 436-amino-acid chain: NADH-quinone oxidoreductase subunit D 1 (436 aa).

The protein belongs to the complex I 49 kDa subunit family. In terms of assembly, NDH-1 is composed of 14 different subunits. Subunits NuoB, C, D, E, F, and G constitute the peripheral sector of the complex.

Its subcellular location is the cell inner membrane. It carries out the reaction a quinone + NADH + 5 H(+)(in) = a quinol + NAD(+) + 4 H(+)(out). NDH-1 shuttles electrons from NADH, via FMN and iron-sulfur (Fe-S) centers, to quinones in the respiratory chain. The immediate electron acceptor for the enzyme in this species is believed to be ubiquinone. Couples the redox reaction to proton translocation (for every two electrons transferred, four hydrogen ions are translocated across the cytoplasmic membrane), and thus conserves the redox energy in a proton gradient. The sequence is that of NADH-quinone oxidoreductase subunit D 1 from Stenotrophomonas maltophilia (strain R551-3).